The chain runs to 261 residues: MSDTPQLVVHRDKELMAEAAAARLITKIVDAQASRGSASVVLTGGRNGNGLLAALAGSPARDAIDWSRLDLWWGDERFLPEGDPERNVTQAQQALLDSVPLDPKRVHAMAASDGPYGSDVEAAAAAYAQELATASVPENHAAVPSFDVLLLGVGPDTHVASLFPEHPGVRETERTVIGVHGSPKPPPIRISLTLPAIRAAREVWLLAAGEDKANAVAMALSGAGEIQAPAAGARGRARTLWLLDSAAASQLPRSLYPPASA.

The protein belongs to the glucosamine/galactosamine-6-phosphate isomerase family. 6-phosphogluconolactonase subfamily.

The enzyme catalyses 6-phospho-D-glucono-1,5-lactone + H2O = 6-phospho-D-gluconate + H(+). It participates in carbohydrate degradation; pentose phosphate pathway; D-ribulose 5-phosphate from D-glucose 6-phosphate (oxidative stage): step 2/3. Functionally, hydrolysis of 6-phosphogluconolactone to 6-phosphogluconate. In Streptomyces coelicolor (strain ATCC BAA-471 / A3(2) / M145), this protein is 6-phosphogluconolactonase (pgl).